The primary structure comprises 193 residues: 3-isopropylmalate dehydratase small subunit (193 aa).

The protein belongs to the LeuD family. LeuD type 1 subfamily. In terms of assembly, heterodimer of LeuC and LeuD.

It catalyses the reaction (2R,3S)-3-isopropylmalate = (2S)-2-isopropylmalate. It participates in amino-acid biosynthesis; L-leucine biosynthesis; L-leucine from 3-methyl-2-oxobutanoate: step 2/4. Functionally, catalyzes the isomerization between 2-isopropylmalate and 3-isopropylmalate, via the formation of 2-isopropylmaleate. The chain is 3-isopropylmalate dehydratase small subunit from Listeria monocytogenes serotype 4b (strain CLIP80459).